The primary structure comprises 89 residues: Small ribosomal subunit protein uS14 (89 aa).

The protein belongs to the universal ribosomal protein uS14 family. In terms of assembly, part of the 30S ribosomal subunit. Contacts proteins S3 and S10.

Its function is as follows. Binds 16S rRNA, required for the assembly of 30S particles and may also be responsible for determining the conformation of the 16S rRNA at the A site. The chain is Small ribosomal subunit protein uS14 from Lacticaseibacillus casei (strain BL23) (Lactobacillus casei).